The primary structure comprises 154 residues: Myoglobin (154 aa).

In terms of domain architecture, Globin spans 2–148 (GLSDGEWQLV…FRNDIAAKYK (147 aa)). Serine 4 bears the Phosphoserine mark. Nitrite is bound at residue histidine 65. Histidine 65 lines the O2 pocket. Threonine 68 is modified (phosphothreonine). Histidine 94 is a heme b binding site.

It belongs to the globin family. Monomeric.

The protein resides in the cytoplasm. It is found in the sarcoplasm. The catalysed reaction is Fe(III)-heme b-[protein] + nitric oxide + H2O = Fe(II)-heme b-[protein] + nitrite + 2 H(+). The enzyme catalyses H2O2 + AH2 = A + 2 H2O. Monomeric heme protein which primary function is to store oxygen and facilitate its diffusion within muscle tissues. Reversibly binds oxygen through a pentacoordinated heme iron and enables its timely and efficient release as needed during periods of heightened demand. Depending on the oxidative conditions of tissues and cells, and in addition to its ability to bind oxygen, it also has a nitrite reductase activity whereby it regulates the production of bioactive nitric oxide. Under stress conditions, like hypoxia and anoxia, it also protects cells against reactive oxygen species thanks to its pseudoperoxidase activity. In Tupaia glis (Common tree shrew), this protein is Myoglobin (MB).